Here is a 440-residue protein sequence, read N- to C-terminus: Glycerophosphocholine cholinephosphodiesterase ENPP6 (440 aa).

The first 22 residues, 1-22 (MAGKLWTFLLLFGFSWVWPASA), serve as a signal peptide directing secretion. Substrate-binding residues include aspartate 32, serine 71, and asparagine 92. Aspartate 32 and serine 71 together coordinate Zn(2+). Catalysis depends on serine 71, which acts as the Nucleophile. Serine 71 is modified (phosphoserine). N-linked (GlcNAc...) asparagine glycosylation is found at asparagine 100 and asparagine 118. Cysteine 142 and cysteine 154 are oxidised to a cystine. Substrate is bound at residue aspartate 193. Residues aspartate 193, histidine 197, aspartate 240, and histidine 241 each contribute to the Zn(2+) site. Histidine 241 lines the substrate pocket. A glycan (N-linked (GlcNAc...) asparagine) is linked at asparagine 341. Histidine 354 is a substrate binding site. Histidine 354 provides a ligand contact to Zn(2+). Residue asparagine 404 is glycosylated (N-linked (GlcNAc...) asparagine). Serine 419 carries the GPI-anchor amidated serine lipid modification. The propeptide at 420 to 440 (SSPSIPPNSCALVLILLLYFV) is removed in mature form.

This sequence belongs to the nucleotide pyrophosphatase/phosphodiesterase family. As to quaternary structure, homodimer; disulfide-linked. Homotetramer. The cofactor is Zn(2+).

It localises to the cell membrane. It carries out the reaction sn-glycerol 3-phosphocholine + H2O = phosphocholine + glycerol + H(+). It catalyses the reaction a 1-acyl-sn-glycero-3-phosphocholine + H2O = a 1-acyl-sn-glycerol + phosphocholine + H(+). The catalysed reaction is a 1-O-alkyl-sn-glycero-3-phosphocholine + H2O = a 1-O-alkyl-sn-glycerol + phosphocholine + H(+). The enzyme catalyses 1-dodecanoyl-sn-glycero-3-phosphocholine + H2O = 1-dodecanoyl-sn-glycerol + phosphocholine + H(+). It carries out the reaction 1-hexadecanoyl-sn-glycero-3-phosphocholine + H2O = 1-hexadecanoyl-sn-glycerol + phosphocholine + H(+). It catalyses the reaction 1-(5Z,8Z,11Z,14Z-eicosatetraenoyl)-sn-glycero-3-phosphocholine + H2O = 1-(5Z,8Z,11Z,14Z-eicosatetraenoyl)-sn-glycerol + phosphocholine + H(+). The catalysed reaction is 1-tetradecanoyl-sn-glycero-3-phosphocholine + H2O = 1-tetradecanoyl-sn-glycerol + phosphocholine + H(+). The enzyme catalyses sphing-4-enine-phosphocholine + H2O = sphing-4-enine + phosphocholine + H(+). It carries out the reaction 1-(9Z-octadecenoyl)-sn-glycero-3-phosphocholine + H2O = 1-(9Z-octadecenoyl)-sn-glycerol + phosphocholine + H(+). It catalyses the reaction 1-(9Z,12Z)-octadecadienoyl-sn-glycero-3-phosphocholine + H2O = 1-(9Z,12Z-octadecadienoyl)-sn-glycerol + phosphocholine + H(+). The catalysed reaction is glycero-2-phosphocholine + H2O = phosphocholine + glycerol + H(+). With respect to regulation, inhibited by EDTA and EGTA in vitro. In terms of biological role, choline-specific glycerophosphodiesterase that hydrolyzes glycerophosphocholine (GPC) and lysophosphatidylcholine (LPC) and contributes to supplying choline to the cells. Has a preference for LPC with short (12:0 and 14:0) or polyunsaturated (18:2 and 20:4) fatty acids. In vitro, hydrolyzes only choline-containing lysophospholipids, such as sphingosylphosphorylcholine (SPC), platelet-activating factor (PAF) and lysoPAF, but not other lysophospholipids. The polypeptide is Glycerophosphocholine cholinephosphodiesterase ENPP6 (Rattus norvegicus (Rat)).